Reading from the N-terminus, the 286-residue chain is L-rhamnose-binding lectin CSL1 (286 aa).

SUEL-type lectin domains are found at residues 96–186 and 193–280; these read TTCE…YICL and TCEG…YTCL.

Its function is as follows. L-rhamnose binding lectin. Has hemagglutinating activity towards rabbit erythrocytes, but not human type B erythrocytes. Hemagglutinating activity is inhibited by smooth-type lipopolysaccharide (LPS) from K.pneumoniae, E.coli K-235, S.flexneri 1A, A.salmonicida and S.minnesota and rough-type LPS from S.flexneri, but not by rough-type LPS from E.coli K12 and E.coli EH100. Agglutinates E.coli K12 and B.subtilis. The chain is L-rhamnose-binding lectin CSL1 from Oncorhynchus keta (Chum salmon).